The sequence spans 426 residues: F-box protein At2g15640 (426 aa).

The F-box domain occupies Met1–Thr48.

This is F-box protein At2g15640 from Arabidopsis thaliana (Mouse-ear cress).